The following is a 793-amino-acid chain: MTLASPPQIKPLTDEELHKINAYWRAANYLSVGQIYLLDNPLLREPLNKEHVKPRLLGHWGTTPGLNFIYVHLNRIIKKYDQSMVYIAGPGHGGPGLVANTYLEGTYSEYYPNISQDAGGMQKLFKQFSFPGGIPSHVAPETPGSIHEGGELGYALVHAFGAAFDNPDLIVAAVVGDGEAETGALATSWHSNKFLNPASDGAVLPILHLNGYKIANPTVLARLSYEELESLFVGYGYKPYFVEGSDPALVHQQMAAILDTVIAEIHSIQREARVHGFSKRPQWPMIILRTPKGWTGPKEVDGKKTEDYWRSHQVPFGNVTGNPEHLKLLEEWLKSYKPEELFDANGKLIPELAELAPKGDRRMGDNPHANGGILLRDLVMPDFQNYAIEVPQPGRVMAEATQVTGKFLRDVMKLNLDSRNFRVFGPDETASNRINAVLDVTDRTWVAQKLPEDDHLDPSGRVMEILSETCCQGWLEGYLLTGRHGFFSCYEAFIHIIDSMFNQHAKWLKTTRHISWRRPVASLNYLLTSHVWRQDHNGFSHQDPGFIDHVVNKKSEIIRVYLPPDANTLLSVTDHCLRSRNYVNVIVAGKQPALQFLDMDAAVKHCTKGIGIWEWASNDQGSEPDVVMACAGDVPTLETLAAVDILRQHFPDLKVRVVNVVDLMTLQPKTEHPHGLNPKDFETIFTTDKPIIFAFHGYPWLIHRLTYRQPNHNNLHVRGYKEEGTTTTPFDMVVLNDLDRFHLVMDVIDRVPKLGYKAAYVKQQLQDKLIEHKHYISQHGEDMPDISDWQWPY.

Belongs to the XFP family. The cofactor is thiamine diphosphate.

The protein is Probable phosphoketolase 2 of Nostoc sp. (strain PCC 7120 / SAG 25.82 / UTEX 2576).